A 316-amino-acid chain; its full sequence is Apolipoprotein E (316 aa).

A signal peptide spans 1-18 (MKVLWVALVVALLAGCQA). Tandem repeats lie at residues 79–100 (VLMEETMKEVKAYREELEGQLA), 101–122 (PMAQETQARVSKELQAAQARLG), 123–144 (SDMEDLRNRLAQYRSEVQAMLG), 145–166 (QSTEELRARMASHLRKLRKRLL), 167–188 (RDADDLKKRLAVYQAGASEGAE), 189–210 (RSVSAIRERLRPLVEQSQSRAA), 211–232 (TLSTQVGQPLLDRAEAWRQKLH), and 233–254 (GRLEEVGVRAQDRLDKMRQQLE). The segment at 79-254 (VLMEETMKEV…RLDKMRQQLE (176 aa)) is 8 X 22 AA approximate tandem repeats. Methionine 142 is subject to Methionine sulfoxide. Serine 146 bears the Phosphoserine mark. The LDL and other lipoprotein receptors binding stretch occupies residues 157-167 (HLRKLRKRLLR). Residue 161–164 (LRKR) coordinates heparin. Residues 209-289 (AATLSTQVGQ…SWFEPLVEDM (81 aa)) form a lipid-binding and lipoprotein association region. 228–235 (RQKLHGRL) serves as a coordination point for heparin. Residues 265-316 (SQIRLQAEAFQARLRSWFEPLVEDMQRQWAGLVEKVQLALHLSPTSPPSENH) form a homooligomerization region. Residues 277-289 (RLRSWFEPLVEDM) are specificity for association with VLDL.

Belongs to the apolipoprotein A1/A4/E family. Homotetramer. May interact with ABCA1; functionally associated with ABCA1 in the biogenesis of HDLs. May interact with APP/A4 amyloid-beta peptide; the interaction is extremely stable in vitro but its physiological significance is unclear. May interact with MAPT. May interact with MAP2. In the cerebrospinal fluid, interacts with secreted SORL1. Interacts with PMEL; this allows the loading of PMEL luminal fragment on ILVs to induce fibril nucleation. In terms of processing, APOE exists as multiple glycosylated and sialylated glycoforms within cells and in plasma. The extent of glycosylation and sialylation are tissue and context specific. Glycated in plasma VLDL. Post-translationally, phosphorylated by FAM20C in the extracellular medium.

It is found in the secreted. The protein localises to the extracellular space. The protein resides in the extracellular matrix. Its subcellular location is the extracellular vesicle. It localises to the endosome. It is found in the multivesicular body. In terms of biological role, APOE is an apolipoprotein, a protein associating with lipid particles, that mainly functions in lipoprotein-mediated lipid transport between organs via the plasma and interstitial fluids. APOE is a core component of plasma lipoproteins and is involved in their production, conversion and clearance. Apolipoproteins are amphipathic molecules that interact both with lipids of the lipoprotein particle core and the aqueous environment of the plasma. As such, APOE associates with chylomicrons, chylomicron remnants, very low density lipoproteins (VLDL) and intermediate density lipoproteins (IDL) but shows a preferential binding to high-density lipoproteins (HDL). It also binds a wide range of cellular receptors including the LDL receptor/LDLR and the very low-density lipoprotein receptor/VLDLR that mediate the cellular uptake of the APOE-containing lipoprotein particles. Finally, APOE also has a heparin-binding activity and binds heparan-sulfate proteoglycans on the surface of cells, a property that supports the capture and the receptor-mediated uptake of APOE-containing lipoproteins by cells. In Ovis aries (Sheep), this protein is Apolipoprotein E (APOE).